The chain runs to 129 residues: Short-chain dehydrogenase/reductase homolog YusR (129 aa).

Belongs to the short-chain dehydrogenases/reductases (SDR) family.

This Bacillus subtilis (strain 168) protein is Short-chain dehydrogenase/reductase homolog YusR (yusR).